Consider the following 297-residue polypeptide: Acetylglutamate kinase (297 aa).

Substrate contacts are provided by residues 73-74 (GG), R95, and N188.

It belongs to the acetylglutamate kinase family. ArgB subfamily.

Its subcellular location is the cytoplasm. It catalyses the reaction N-acetyl-L-glutamate + ATP = N-acetyl-L-glutamyl 5-phosphate + ADP. The protein operates within amino-acid biosynthesis; L-arginine biosynthesis; N(2)-acetyl-L-ornithine from L-glutamate: step 2/4. In terms of biological role, catalyzes the ATP-dependent phosphorylation of N-acetyl-L-glutamate. The protein is Acetylglutamate kinase of Nostoc sp. (strain PCC 7120 / SAG 25.82 / UTEX 2576).